A 398-amino-acid polypeptide reads, in one-letter code: 1-deoxy-D-xylulose 5-phosphate reductoisomerase (398 aa).

NADPH contacts are provided by T10, G11, S12, I13, G36, K37, N38, and N124. Position 125 (K125) interacts with 1-deoxy-D-xylulose 5-phosphate. Residue E126 participates in NADPH binding. D150 lines the Mn(2+) pocket. Positions 151, 152, 186, and 209 each coordinate 1-deoxy-D-xylulose 5-phosphate. A Mn(2+)-binding site is contributed by E152. An NADPH-binding site is contributed by G215. S222, N227, K228, and E231 together coordinate 1-deoxy-D-xylulose 5-phosphate. E231 is a Mn(2+) binding site.

It belongs to the DXR family. In terms of assembly, homodimer. Mg(2+) is required as a cofactor. Requires Mn(2+) as cofactor.

It carries out the reaction 2-C-methyl-D-erythritol 4-phosphate + NADP(+) = 1-deoxy-D-xylulose 5-phosphate + NADPH + H(+). The protein operates within isoprenoid biosynthesis; isopentenyl diphosphate biosynthesis via DXP pathway; isopentenyl diphosphate from 1-deoxy-D-xylulose 5-phosphate: step 1/6. Its function is as follows. Catalyzes the NADPH-dependent rearrangement and reduction of 1-deoxy-D-xylulose-5-phosphate (DXP) to 2-C-methyl-D-erythritol 4-phosphate (MEP). The protein is 1-deoxy-D-xylulose 5-phosphate reductoisomerase of Shigella flexneri.